The primary structure comprises 681 residues: SRSF protein kinase 2 (681 aa).

The segment at 1–63 (MSVNSEKSSS…EQEDPADYCK (63 aa)) is disordered. The span at 22-41 (LVPPPPPPPPPPPLPDPAPP) shows a compositional bias: pro residues. Residues 42–59 (EPEEEILGSDDEEQEDPA) show a composition bias toward acidic residues. Ser50 carries the post-translational modification Phosphoserine. The Protein kinase domain occupies 79 to 681 (YHVIRKLGWG…ECLRHPWLNS (603 aa)). ATP contacts are provided by residues 85–93 (LGWGHFSTV) and Lys108. The active-site Proton acceptor is the Asp212. Disordered stretches follow at residues 237–270 (WQKA…KKKL), 302–452 (ENIT…PLFS), and 467–499 (GSPL…KTKT). Thr331 and Thr332 each carry phosphothreonine. A Phosphoserine modification is found at Ser378. A compositionally biased stretch (acidic residues) spans 395 to 419 (QLEDEEDDEDDCANPEEYNLDEPNA). Positions 421-431 (SDYTYSSSYEQ) are enriched in polar residues. Ser468 carries the post-translational modification Phosphoserine. Thr471 carries the post-translational modification Phosphothreonine. Phosphoserine is present on residues Ser477, Ser479, and Ser483. Thr485 is subject to Phosphothreonine; by PKB/AKT1. A phosphoserine mark is found at Ser487 and Ser490. Ser581 is subject to Phosphoserine; by CK2.

This sequence belongs to the protein kinase superfamily. CMGC Ser/Thr protein kinase family. Associates with U4/U6-U5 tri-small nuclear ribonucleoproteins (U4/U6-U5 tri-snRNPs). Interacts with PKB/AKT1 in a phosphorylation-dependent manner. The phosphorylated form (by PKB/AKT1) interacts with YWHAB and YWHAE. Interaction with YWHAB suppresses its cleavage by caspases and inhibits the release of its N-terminal pro-apoptotic fragment. Interacts with SFN. Interacts with ACIN1. Interacts with POLR2A/RNA polymerase II; the interaction occurs during the co-transcriptional formation of inappropriate R-loops. It depends on Mg(2+) as a cofactor. In terms of processing, phosphorylation at Thr-485 by PKB/AKT1 enhances its stimulatory activity in triggering cyclin-D1 (CCND1) expression and promoting apoptosis in neurons, which can be blocked by YWHAB. It also enhances its protein kinase activity toward ACIN1 and SRSF2, promotes its nuclear translocation and prevents its proteolytic cleavage. Post-translationally, proteolytically cleaved at Asp-137 and Asp-401 by caspase-3 during apoptotic cell death. Cleavage at Asp-137 which is the major site of cleavage, produces a small N-terminal fragment that translocates into nucleus and promotes VP16-induced apoptosis. As to expression, expressed in testes, lung and brain.

Its subcellular location is the cytoplasm. It is found in the nucleus. The protein localises to the nucleoplasm. It localises to the nucleus speckle. The protein resides in the chromosome. It carries out the reaction L-seryl-[protein] + ATP = O-phospho-L-seryl-[protein] + ADP + H(+). The catalysed reaction is L-threonyl-[protein] + ATP = O-phospho-L-threonyl-[protein] + ADP + H(+). Activated by phosphorylation on Ser-50 and Ser-581. Functionally, serine/arginine-rich protein-specific kinase which specifically phosphorylates its substrates at serine residues located in regions rich in arginine/serine dipeptides, known as RS domains and is involved in the phosphorylation of SR splicing factors and the regulation of splicing. Promotes neuronal apoptosis by up-regulating cyclin-D1 (CCND1) expression. This is done by the phosphorylation of SRSF2, leading to the suppression of p53/TP53 phosphorylation thereby relieving the repressive effect of p53/TP53 on cyclin-D1 (CCND1) expression. Phosphorylates ACIN1, and redistributes it from the nuclear speckles to the nucleoplasm, resulting in cyclin A1 but not cyclin A2 up-regulation. Plays an essential role in spliceosomal B complex formation via the phosphorylation of DDX23/PRP28. Probably by phosphorylating DDX23, leads to the suppression of incorrect R-loops formed during transcription; R-loops are composed of a DNA:RNA hybrid and the associated non-template single-stranded DNA. This chain is SRSF protein kinase 2, found in Mus musculus (Mouse).